We begin with the raw amino-acid sequence, 366 residues long: Chorismate synthase (366 aa).

2 residues coordinate NADP(+): Arg48 and Arg54. Residues 125-127, 238-239, Gly278, 293-297, and Arg319 contribute to the FMN site; these read RSS, NA, and KPTSS.

This sequence belongs to the chorismate synthase family. As to quaternary structure, homotetramer. Requires FMNH2 as cofactor.

It catalyses the reaction 5-O-(1-carboxyvinyl)-3-phosphoshikimate = chorismate + phosphate. It participates in metabolic intermediate biosynthesis; chorismate biosynthesis; chorismate from D-erythrose 4-phosphate and phosphoenolpyruvate: step 7/7. Catalyzes the anti-1,4-elimination of the C-3 phosphate and the C-6 proR hydrogen from 5-enolpyruvylshikimate-3-phosphate (EPSP) to yield chorismate, which is the branch point compound that serves as the starting substrate for the three terminal pathways of aromatic amino acid biosynthesis. This reaction introduces a second double bond into the aromatic ring system. The sequence is that of Chorismate synthase from Methylococcus capsulatus (strain ATCC 33009 / NCIMB 11132 / Bath).